Consider the following 554-residue polypeptide: Guanine nucleotide-binding protein alpha-2 subunit (554 aa).

2 disordered regions span residues 1 to 139 (MGLC…NNSN) and 157 to 183 (VNGN…THSG). Residue Gly2 is the site of N-myristoyl glycine attachment. A lipid anchor (S-palmitoyl cysteine) is attached at Cys4. Composition is skewed to basic and acidic residues over residues 7–17 (KDSRESTHDGG) and 28–43 (ANRR…DKKQ). Residues 52 to 66 (GSIVNAASNINNSSS) show a composition bias toward low complexity. Over residues 67–85 (GKTKISTVSEDGTVSNGVG) the composition is skewed to polar residues. Residues 91 to 139 (DNANNKNNGNNNNSNNNDNNNNNNNNIGNNINGNNNNDSENIHDSNNSN) show a composition bias toward low complexity. The 327-residue stretch at 228 to 554 (NALKVLLLGS…ENSLKDSGVL (327 aa)) folds into the G-alpha domain. Residues 231-244 (KVLLLGSGESGKST) form a G1 motif region. Glu239, Ser240, Gly241, Lys242, Ser243, Thr244, Asp351, Ile376, Thr382, Gly405, Asn471, Lys472, Asp474, and Ala526 together coordinate GTP. Ser243 serves as a coordination point for Mg(2+). The interval 374–382 (DVIRTRKKT) is G2 motif. Residue Thr382 coordinates Mg(2+). Positions 398–407 (LHFFDVGGQR) are G3 motif. The segment at 467–474 (VLFLNKID) is G4 motif. The G5 motif stretch occupies residues 524–529 (TQATDT).

This sequence belongs to the G-alpha family. In terms of assembly, g proteins are composed of 3 units; alpha, beta and gamma. The alpha chain contains the guanine nucleotide binding site. Mg(2+) serves as cofactor.

In terms of biological role, guanine nucleotide-binding proteins (G proteins) are involved as modulators or transducers in various transmembrane signaling systems. This protein may be involved in the determination of the cAMP level according to nutritional conditions, most probably as a regulator of adenylyl cyclase. The chain is Guanine nucleotide-binding protein alpha-2 subunit (GPA2) from Kluyveromyces lactis (strain ATCC 8585 / CBS 2359 / DSM 70799 / NBRC 1267 / NRRL Y-1140 / WM37) (Yeast).